The primary structure comprises 1305 residues: Cyclin-G-associated kinase (1305 aa).

Ser-2 carries the post-translational modification N-acetylserine. 2 positions are modified to phosphoserine: Ser-2 and Ser-16. A Protein kinase domain is found at 40–317 (LRVRRVLAEG…EVVRQLQEIA (278 aa)). ATP contacts are provided by residues 46-54 (LAEGGFAFV) and Lys-69. Asp-173 serves as the catalytic Proton acceptor. Positions 397 to 564 (SVANYAKGDL…EYVCDMVAEE (168 aa)) constitute a Phosphatase tensin-type domain. A Phosphoserine modification is found at Ser-454. Positions 570 to 708 (SKPMLVKSVV…FQVNLEVEVE (139 aa)) constitute a C2 tensin-type domain. 2 disordered regions span residues 707–732 (VEPR…NPKI) and 747–854 (FGKP…AAGT). Ser-768 is modified (phosphoserine). Thr-774 is subject to Phosphothreonine. Over residues 776–789 (SDSPQSSSTDTNHF) the composition is skewed to polar residues. Position 781 is a phosphoserine (Ser-781). Thr-792 bears the Phosphothreonine mark. Over residues 805–816 (LDNTSPKESQSV) the composition is skewed to polar residues. Residues Ser-809, Ser-824, and Ser-827 each carry the phosphoserine modification. The span at 822–832 (DGSEVSDEEEA) shows a compositional bias: acidic residues. The segment covering 836-848 (SEERKPGAGEDTP) has biased composition (basic and acidic residues). Ser-938 carries the post-translational modification Phosphoserine. The disordered stretch occupies residues 1037–1139 (DTWADTATPG…WTPQAKPAPR (103 aa)). Residues 1084–1099 (DLSDLSSSLQGLPAGL) are compositionally biased toward low complexity. Positions 1111–1132 (TQKSNSPWQANRPTAPGTSWTP) are enriched in polar residues. Arg-1122 is modified (omega-N-methylarginine). Phosphoserine is present on Ser-1171. The J domain maps to 1241–1305 (SRWTPVSMAD…FENQGSRPLF (65 aa)).

Belongs to the protein kinase superfamily. Ser/Thr protein kinase family.

The protein resides in the cytoplasm. It localises to the perinuclear region. Its subcellular location is the golgi apparatus. The protein localises to the trans-Golgi network. It is found in the cell junction. The protein resides in the focal adhesion. It localises to the cytoplasmic vesicle. Its subcellular location is the clathrin-coated vesicle. It catalyses the reaction L-seryl-[protein] + ATP = O-phospho-L-seryl-[protein] + ADP + H(+). The enzyme catalyses L-threonyl-[protein] + ATP = O-phospho-L-threonyl-[protein] + ADP + H(+). In terms of biological role, associates with cyclin G and CDK5. Seems to act as an auxilin homolog that is involved in the uncoating of clathrin-coated vesicles by Hsc70 in non-neuronal cells. Expression oscillates slightly during the cell cycle, peaking at G1. May play a role in clathrin-mediated endocytosis and intracellular trafficking, and in the dynamics of clathrin assembly/disassembly. The chain is Cyclin-G-associated kinase from Mus musculus (Mouse).